Reading from the N-terminus, the 168-residue chain is MPRSRINGNFIDKTFSIVANILLRVIPTTSGEKEAFTYYRDGMSAQSEGNYAEALQNYYEAMRLEIDPYDRSYILYNIGLIHTSNGEHTKALEYYFRALERNPFLPQAFNNMAVICHYRGEQAIQQGDSEIAEAWFDQAAEYWKQAIALTPGNYIEAHNWLKITRRFE.

TPR repeat units follow at residues 35-68 (AFTY…EIDP), 72-105 (SYIL…NPFL), and 120-153 (GEQA…TPGN).

The protein belongs to the Ycf3 family.

Its subcellular location is the plastid. It localises to the chloroplast thylakoid membrane. Its function is as follows. Essential for the assembly of the photosystem I (PSI) complex. May act as a chaperone-like factor to guide the assembly of the PSI subunits. The sequence is that of Photosystem I assembly protein Ycf3 from Nicotiana sylvestris (Wood tobacco).